A 181-amino-acid polypeptide reads, in one-letter code: Protein OPG005 (181 aa).

The polypeptide is Protein OPG005 (OPG005) (Vaccinia virus (strain Copenhagen) (VACV)).